The sequence spans 123 residues: Class I hydrophobin 2 (123 aa).

Positions 1 to 16 (MYAYTVIAFLAASVAA) are cleaved as a signal peptide. Intrachain disulfides connect Cys35-Cys97, Cys43-Cys91, Cys44-Cys72, and Cys98-Cys116.

Belongs to the fungal hydrophobin family.

It is found in the secreted. The protein localises to the cell wall. Aerial growth, conidiation, and dispersal of filamentous fungi in the environment rely upon a capability of their secreting small amphipathic proteins called hydrophobins (HPBs) with low sequence identity. Class I can self-assemble into an outermost layer of rodlet bundles on aerial cell surfaces, conferring cellular hydrophobicity that supports fungal growth, development and dispersal; whereas Class II form highly ordered films at water-air interfaces through intermolecular interactions but contribute nothing to the rodlet structure. HYD1 and HYD2 are required for the structural integrity of the long aerial chains of microconidia. Does not seem to be important for the ability to cause seedling disease. This Gibberella moniliformis (Maize ear and stalk rot fungus) protein is Class I hydrophobin 2.